The primary structure comprises 481 residues: Bestrophin homolog 17 (481 aa).

At 1-27 (MTVSYQLDVSSGNPLLFLRLLGRWRGS) the chain is on the cytoplasmic side. Residues 28–48 (IWKSVVGDLFVWLLFYYAIYF) form a helical membrane-spanning segment. At 49–95 (AYRYAFSKQLQTVFEEISIHTDDRMKYLPLTFMLGFFVTTVFERWRS) the chain is on the extracellular side. The chain crosses the membrane as a helical span at residues 96–116 (ALNVMPFIESVALSVAVLLPG). Residues 117-230 (KGREDRLTRR…AMETLIKFDA (114 aa)) lie on the Cytoplasmic side of the membrane. The helical transmembrane segment at 231-251 (IPIPIAYPQVVFLAVRVYFAI) threads the bilayer. Residues 252 to 274 (CLVSRQFLISDMKSKTQMDWPVP) lie on the Extracellular side of the membrane. The helical transmembrane segment at 275-295 (IMTVLEFIFVIGWMKVAEVLL) threads the bilayer. Over 296 to 481 (NPLGEDDDDF…SSEESVDKKG (186 aa)) the chain is Cytoplasmic. The interval 427–481 (AGMLNKSTQPDRPTMETVSEEHEPSHFYRGDRVHSSDSGLSKTQQSSEESVDKKG) is disordered. Positions 445–461 (SEEHEPSHFYRGDRVHS) are enriched in basic and acidic residues. A compositionally biased stretch (polar residues) spans 462 to 474 (SDSGLSKTQQSSE).

Belongs to the anion channel-forming bestrophin (TC 1.A.46) family. Calcium-sensitive chloride channel subfamily. In terms of assembly, forms oligomers.

The protein resides in the cell membrane. Functionally, forms chloride channels. The chain is Bestrophin homolog 17 from Caenorhabditis elegans.